We begin with the raw amino-acid sequence, 784 residues long: Lon protease (784 aa).

The Lon N-terminal domain occupies 6 to 207; it reads LPLMALRDMV…TVITTLTSNI (202 aa). 356 to 363 is an ATP binding site; it reads GPPGVGKT. Residues 592 to 773 enclose the Lon proteolytic domain; that stretch reads EDQIGSTTGL…DQVLKHALVE (182 aa). Residues Ser679 and Lys722 contribute to the active site.

Belongs to the peptidase S16 family. In terms of assembly, homohexamer. Organized in a ring with a central cavity.

It localises to the cytoplasm. It catalyses the reaction Hydrolysis of proteins in presence of ATP.. In terms of biological role, ATP-dependent serine protease that mediates the selective degradation of mutant and abnormal proteins as well as certain short-lived regulatory proteins. Required for cellular homeostasis and for survival from DNA damage and developmental changes induced by stress. Degrades polypeptides processively to yield small peptide fragments that are 5 to 10 amino acids long. Binds to DNA in a double-stranded, site-specific manner. The protein is Lon protease of Rickettsia prowazekii (strain Madrid E).